The sequence spans 181 residues: Bifunctional protein PyrR (181 aa).

The PRPP-binding signature appears at 101-113; that stretch reads VILVDDVLFTGRT.

Belongs to the purine/pyrimidine phosphoribosyltransferase family. PyrR subfamily.

It catalyses the reaction UMP + diphosphate = 5-phospho-alpha-D-ribose 1-diphosphate + uracil. In terms of biological role, regulates the transcription of the pyrimidine nucleotide (pyr) operon in response to exogenous pyrimidines. Functionally, also displays a weak uracil phosphoribosyltransferase activity which is not physiologically significant. This chain is Bifunctional protein PyrR, found in Desulfosudis oleivorans (strain DSM 6200 / JCM 39069 / Hxd3) (Desulfococcus oleovorans).